The primary structure comprises 354 residues: Methylthioribose-1-phosphate isomerase (354 aa).

Substrate contacts are provided by residues 58–60 (RGA), Arg101, and Gln204. Catalysis depends on Asp245, which acts as the Proton donor. Position 255–256 (255–256 (NK)) interacts with substrate.

Belongs to the eIF-2B alpha/beta/delta subunits family. MtnA subfamily.

It catalyses the reaction 5-(methylsulfanyl)-alpha-D-ribose 1-phosphate = 5-(methylsulfanyl)-D-ribulose 1-phosphate. Its pathway is amino-acid biosynthesis; L-methionine biosynthesis via salvage pathway; L-methionine from S-methyl-5-thio-alpha-D-ribose 1-phosphate: step 1/6. Catalyzes the interconversion of methylthioribose-1-phosphate (MTR-1-P) into methylthioribulose-1-phosphate (MTRu-1-P). This Stenotrophomonas maltophilia (strain R551-3) protein is Methylthioribose-1-phosphate isomerase.